The sequence spans 355 residues: cAMP-dependent protein kinase catalytic subunit PRKX (355 aa).

M1 is modified (N-acetylmethionine). The interval 1 to 42 (MEPPAGAAATVKDPDHDPVKTKVSAPAADPKPRTSSQKAGHS) is disordered. The Protein kinase domain occupies 46 to 300 (WDTIATVGTG…AEDIKRHRWF (255 aa)). ATP-binding positions include 52 to 60 (VGTGTFGRV) and K75. The active-site Proton acceptor is the D169. T200 bears the Phosphothreonine mark. The AGC-kinase C-terminal domain maps to 301 to 355 (RGVEWESVPQRKLKPPIVPKLSGDGDISNFETYPESELDKTPSVSDKDLETFKNF). The tract at residues 316–355 (PIVPKLSGDGDISNFETYPESELDKTPSVSDKDLETFKNF) is disordered. Residues 337 to 355 (ELDKTPSVSDKDLETFKNF) show a composition bias toward basic and acidic residues.

The protein belongs to the protein kinase superfamily. AGC Ser/Thr protein kinase family. cAMP subfamily. Like other cAMP-dependent protein kinases, the inactive holoenzyme is probably composed of 2 PRKX catalytic subunits and a dimer of regulatory subunits. Interacts (cAMP-dependent) specifically with the regulatory subunits PRKAR1A and PRKAR1B. Compared to other cAMP-dependent serine/threonine protein kinases, does not interact with the 2 other PKA regulatory subunits PRKAR2A and PRKAR2B. Interacts with PIN1 (via WW domain). Interacts with cAMP-dependent protein kinase inhibitor/PKI proteins; inhibits PRKX. Interacts with GPKOW. Interacts with SMAD6. Interacts with PKD1; involved in differentiation and controlled morphogenesis of the kidney. Post-translationally, phosphorylated; autophosphorylates in vitro. In terms of tissue distribution, widely expressed.

It is found in the cytoplasm. Its subcellular location is the nucleus. The catalysed reaction is L-seryl-[protein] + ATP = O-phospho-L-seryl-[protein] + ADP + H(+). The enzyme catalyses L-threonyl-[protein] + ATP = O-phospho-L-threonyl-[protein] + ADP + H(+). Binding of cAMP to the PRKAR1A or PRKAR1B regulatory subunits induces dissociation of the holoenzyme heterotetramer. The released monomeric PRKX is then active and able to phosphorylate its substrates. Serine/threonine protein kinase regulated by and mediating cAMP signaling in cells. Acts through phosphorylation of downstream targets that may include CREB, SMAD6 and PKD1 and has multiple functions in cellular differentiation and epithelial morphogenesis. Regulates myeloid cell differentiation through SMAD6 phosphorylation. Involved in nephrogenesis by stimulating renal epithelial cell migration and tubulogenesis. Also involved in angiogenesis through stimulation of endothelial cell proliferation, migration and vascular-like structure formation. The protein is cAMP-dependent protein kinase catalytic subunit PRKX (Prkx) of Mus musculus (Mouse).